We begin with the raw amino-acid sequence, 767 residues long: 5-methyltetrahydropteroyltriglutamate--homocysteine methyltransferase (767 aa).

Positions 19 and 126 each coordinate 5-methyltetrahydropteroyltri-L-glutamate. L-homocysteine is bound by residues 446–448 (IGS) and E499. L-methionine is bound by residues 446–448 (IGS) and E499. Residues D504, Y527, 530–531 (RY), and W576 each bind 5-methyltetrahydropteroyltri-L-glutamate. D614 serves as a coordination point for L-homocysteine. D614 serves as a coordination point for L-methionine. Residues H657, C659, and E679 each contribute to the Zn(2+) site. The active-site Proton donor is the H707. Residue C739 coordinates Zn(2+).

This sequence belongs to the vitamin-B12 independent methionine synthase family. Zn(2+) is required as a cofactor.

It carries out the reaction 5-methyltetrahydropteroyltri-L-glutamate + L-homocysteine = tetrahydropteroyltri-L-glutamate + L-methionine. It participates in amino-acid biosynthesis; L-methionine biosynthesis via de novo pathway; L-methionine from L-homocysteine (MetE route): step 1/1. Its activity is regulated as follows. Inhibited weakly by methotrexate. Catalyzes the transfer of a methyl group from 5-methyltetrahydrofolate to homocysteine resulting in methionine formation. This chain is 5-methyltetrahydropteroyltriglutamate--homocysteine methyltransferase, found in Candida albicans (strain SC5314 / ATCC MYA-2876) (Yeast).